The primary structure comprises 118 residues: Large ribosomal subunit protein bL20 (118 aa).

Belongs to the bacterial ribosomal protein bL20 family.

Functionally, binds directly to 23S ribosomal RNA and is necessary for the in vitro assembly process of the 50S ribosomal subunit. It is not involved in the protein synthesizing functions of that subunit. In Thermotoga neapolitana (strain ATCC 49049 / DSM 4359 / NBRC 107923 / NS-E), this protein is Large ribosomal subunit protein bL20.